Reading from the N-terminus, the 287-residue chain is GTPase Era (287 aa).

The Era-type G domain maps to 6-178; it reads FSGTSVIIGK…IQNKLKIVPK (173 aa). Residues 14 to 21 form a G1 region; it reads GKPNVGKS. Residue 14 to 21 participates in GTP binding; the sequence is GKPNVGKS. The segment at 40–44 is G2; that stretch reads HTTQS. Residues 62–65 are G3; sequence DTPG. GTP contacts are provided by residues 62 to 66 and 124 to 127; these read DTPGI and NKID. A G4 region spans residues 124 to 127; sequence NKID. The segment at 154–156 is G5; it reads ISG. In terms of domain architecture, KH type-2 spans 207–282; the sequence is LGDELPYSIQ…SIYLSLKVIK (76 aa).

The protein belongs to the TRAFAC class TrmE-Era-EngA-EngB-Septin-like GTPase superfamily. Era GTPase family. Monomer.

Its subcellular location is the cytoplasm. It is found in the cell membrane. In terms of biological role, an essential GTPase that binds both GDP and GTP, with rapid nucleotide exchange. Plays a role in 16S rRNA processing and 30S ribosomal subunit biogenesis and possibly also in cell cycle regulation and energy metabolism. The protein is GTPase Era of Buchnera aphidicola subsp. Baizongia pistaciae (strain Bp).